The following is a 1445-amino-acid chain: ABC-type transporter FGSG_00046 (1445 aa).

The next 11 membrane-spanning stretches (helical) occupy residues 21–41 (LFEECFLDILPWSLFLLMLLV), 77–97 (LILWASIAAFTTAGTVPAAAL), 119–138 (PSSLLGILTLLILLCDVTRV), 150–170 (ISILTTAALPINILLLVFESL), 187–207 (EIVGILNRSVFWWLNSLFILG), 255–277 (TLLRGGLCRLFTALFVTSQPLLL), 297–317 (YGLIGAYLVVYGGRAVFTALA), 368–388 (LQFVHEIWATPAEFGVAIFLL), 392–412 (VALGSLAPVIIIIVAIVGTVL), 481–501 (VFSTATATISPVLGFTIYVLM), and 520–540 (SLFSILSSSVYIFLTSVPAIF). One can recognise an ABC transmembrane type-1 1 domain in the interval 259-541 (GGLCRLFTAL…FLTSVPAIFS (283 aa)). One can recognise an ABC transporter 1 domain in the interval 595–821 (IRDGSVRWKG…DEIEASTYSR (227 aa)). 627–634 (GSVGSGKS) is a binding site for ATP. Positions 803-850 (RNTQKDMQDDEIEASTYSREQNGPKKQEEDANHESNQSPETSQEHELA) are disordered. Residues 824 to 835 (NGPKKQEEDANH) are compositionally biased toward basic and acidic residues. Helical transmembrane passes span 868-888 (GMGFFALSFSLSLVYSFWQNF), 912-932 (IGVYILCAVLALVTHTVVTWF), 1004-1024 (IPLTGVQALFAFTSALVQLVM), 1026-1046 (SIGTKWMAITFPFIIAILAII), 1116-1136 (LTLVLNLVIGAMAILMMGVTI), and 1147-1167 (IGLAFVNLTTFSQSIQSLLTW). An ABC transmembrane type-1 2 domain is found at 974–1173 (HRAPMSYFES…LLTWWTMMEA (200 aa)). Residues 1210–1441 (IELKELSASY…DVSLFQDLFS (232 aa)) form the ABC transporter 2 domain. 1244-1251 (GRTGSGKT) contributes to the ATP binding site.

Belongs to the ABC transporter superfamily. ABCC family.

Its subcellular location is the cell membrane. Functionally, ABC-type transporter; part of the gene cluster that mediates the biosynthesis of gramillins A and B, bicyclic lipopeptides that induce cell death in maize leaves but not in wheat leaves. May be involved in the secretion of gramillins. The sequence is that of ABC-type transporter FGSG_00046 from Gibberella zeae (strain ATCC MYA-4620 / CBS 123657 / FGSC 9075 / NRRL 31084 / PH-1) (Wheat head blight fungus).